The chain runs to 178 residues: Ribosomal RNA small subunit methyltransferase G (178 aa).

S-adenosyl-L-methionine is bound by residues Gly-54, Leu-59, 105–106 (LE), and Arg-120.

It belongs to the methyltransferase superfamily. RNA methyltransferase RsmG family.

The protein localises to the cytoplasm. It carries out the reaction guanosine(527) in 16S rRNA + S-adenosyl-L-methionine = N(7)-methylguanosine(527) in 16S rRNA + S-adenosyl-L-homocysteine. Specifically methylates the N7 position of guanine in position 527 of 16S rRNA. In Helicobacter pylori (strain J99 / ATCC 700824) (Campylobacter pylori J99), this protein is Ribosomal RNA small subunit methyltransferase G.